The primary structure comprises 258 residues: Serine/arginine-rich splicing factor x16 (258 aa).

One can recognise an RRM domain in the interval 8-81 (RKVYVGDLGN…RRARVELSTG (74 aa)). 2 disordered regions span residues 81–113 (GKYA…GGRG) and 130–258 (CRER…VSRD). Positions 86-103 (SGGGGGGGGGGGGGGGLG) are enriched in gly residues. Basic and acidic residues predominate over residues 104–113 (GRDRGGGGRG). Residues 116-132 (KCYECGGRGHFARHCRE) form a CCHC-type zinc finger. Basic residues-rich tracts occupy residues 130–141 (CRERKARQRRRS) and 149–166 (STSR…RSRS). 2 stretches are compositionally biased toward basic and acidic residues: residues 180 to 197 (NGRD…HERN) and 210 to 221 (RRYEDEDDDRVR). Composition is skewed to low complexity over residues 231 to 240 (RSASPAVRRG) and 249 to 258 (SSASRSVSRD).

As to quaternary structure, interacts (via Arg/Ser-rich region) with Alsin2/CG7564, Rbp1 and Doa (via N-terminus). Highly phosphorylated. May be phosphorylated by the serine/threonine-protein kinase Doa.

The protein resides in the nucleus. In terms of biological role, serine/arginine-rich splicing factor (SR protein) involved in differential exon usage during RNA transcript processing, probably by binding exonic splicing enhancer elements and recruiting components of the splicing machinery. Binds RNA stem-loop structures with consensus sequence 5'-CCGUNUNKNW-3'. Regulator of genes involved in lipid and carbohydrate metabolism, the immune response and the response to xenobiotics. The chain is Serine/arginine-rich splicing factor x16 from Drosophila melanogaster (Fruit fly).